A 322-amino-acid polypeptide reads, in one-letter code: Peroxisomal adenine nucleotide carrier 1 (322 aa).

Solcar repeat units follow at residues 5–94 (LESV…FKRV), 104–184 (IGTK…LKQH), and 202–298 (LSAF…ITAT). Helical transmembrane passes span 8–28 (VSEA…LYPL), 104–124 (IGTK…SVLI), 158–178 (FDGL…YTVF), 201–221 (VLSA…ATVL), 254–274 (IPGV…FKGL), and 286–306 (ALLL…ILAI).

This sequence belongs to the mitochondrial carrier (TC 2.A.29) family. Expressed in stamens, pollen grains, seeds, leaves, cotyledons, roots, stems, flowers, hypocotyls and siliques.

It is found in the peroxisome membrane. In terms of biological role, peroxisomal adenine nucleotide transporter catalyzing the counterexchange of ATP with AMP. ATP is needed by reactions that generate acyl-CoA for peroxisomal fatty acid beta-oxidation during postgerminative growth. Required for the beta-oxidation reactions involved in auxin biosynthesis and for the conversion of seed-reserved triacylglycerols into sucrose that is necessary for growth before the onset of photosynthesis. This chain is Peroxisomal adenine nucleotide carrier 1 (PNC1), found in Arabidopsis thaliana (Mouse-ear cress).